A 269-amino-acid chain; its full sequence is NAD-capped RNA hydrolase NudC (269 aa).

R81 is a binding site for substrate. Zn(2+) contacts are provided by C110, C113, C128, and C131. Y136 is a substrate binding site. The Nudix hydrolase domain occupies 137-260 (PRIFPCIIVA…TIARALIEQT (124 aa)). Residues A170, E186, and E190 each coordinate a divalent metal cation. The Nudix box signature appears at 171–192 (GFVEVGETLEQCVAREVLEETG). Residue 204–211 (QPWAFPSS) coordinates substrate. Residue E231 coordinates a divalent metal cation. Substrate is bound at residue A253.

It belongs to the Nudix hydrolase family. NudC subfamily. As to quaternary structure, homodimer. Mg(2+) is required as a cofactor. It depends on Mn(2+) as a cofactor. Requires Zn(2+) as cofactor.

It catalyses the reaction a 5'-end NAD(+)-phospho-ribonucleoside in mRNA + H2O = a 5'-end phospho-adenosine-phospho-ribonucleoside in mRNA + beta-nicotinamide D-ribonucleotide + 2 H(+). The catalysed reaction is NAD(+) + H2O = beta-nicotinamide D-ribonucleotide + AMP + 2 H(+). The enzyme catalyses NADH + H2O = reduced beta-nicotinamide D-ribonucleotide + AMP + 2 H(+). In terms of biological role, mRNA decapping enzyme that specifically removes the nicotinamide adenine dinucleotide (NAD) cap from a subset of mRNAs by hydrolyzing the diphosphate linkage to produce nicotinamide mononucleotide (NMN) and 5' monophosphate mRNA. The NAD-cap is present at the 5'-end of some mRNAs and stabilizes RNA against 5'-processing. Has preference for mRNAs with a 5'-end purine. Catalyzes the hydrolysis of a broad range of dinucleotide pyrophosphates. This is NAD-capped RNA hydrolase NudC from Vibrio cholerae serotype O1 (strain ATCC 39315 / El Tor Inaba N16961).